Here is a 278-residue protein sequence, read N- to C-terminus: 4-deoxy-L-threo-5-hexosulose-uronate ketol-isomerase (278 aa).

Positions 196, 198, 203, and 245 each coordinate Zn(2+).

The protein belongs to the KduI family. Homohexamer. Zn(2+) serves as cofactor.

It catalyses the reaction 5-dehydro-4-deoxy-D-glucuronate = 3-deoxy-D-glycero-2,5-hexodiulosonate. It participates in glycan metabolism; pectin degradation; 2-dehydro-3-deoxy-D-gluconate from pectin: step 4/5. Functionally, catalyzes the isomerization of 5-dehydro-4-deoxy-D-glucuronate to 3-deoxy-D-glycero-2,5-hexodiulosonate. The sequence is that of 4-deoxy-L-threo-5-hexosulose-uronate ketol-isomerase from Escherichia coli (strain UTI89 / UPEC).